Here is a 185-residue protein sequence, read N- to C-terminus: Ribosome-recycling factor (185 aa).

Belongs to the RRF family.

It localises to the cytoplasm. Functionally, responsible for the release of ribosomes from messenger RNA at the termination of protein biosynthesis. May increase the efficiency of translation by recycling ribosomes from one round of translation to another. The chain is Ribosome-recycling factor from Pasteurella multocida (strain Pm70).